Consider the following 725-residue polypeptide: Beta-adducin (725 aa).

Positions 1–22 are disordered; the sequence is MSEDTVPEAASPPPSQGQHYFD. A phosphoserine mark is found at S11 and S25. T55 bears the Phosphothreonine mark. 2 positions are modified to phosphoserine: S60 and S344. An interaction with calmodulin region spans residues 425–444; that stretch reads KQQKEKTRWLNTPNTYLRVN. Residues 525–725 are disordered; the sequence is AEKSRSPSTE…KSKKKEKVES (201 aa). S530 and S532 each carry phosphoserine. T533 carries the phosphothreonine modification. S535 is modified (phosphoserine). At T561 the chain carries Phosphothreonine. Positions 566-589 are enriched in basic and acidic residues; the sequence is EEYKKEVERKKLEQEQEGEKDIAT. 4 positions are modified to phosphoserine: S594, S598, S602, and S606. Residues 596 to 621 show a composition bias toward polar residues; sequence VKSTPASPVQSPSKAGTKSPAVSPSK. T612 carries the post-translational modification Phosphothreonine. A phosphoserine mark is found at S614, S618, and S620. Over residues 622-631 the composition is skewed to basic and acidic residues; that stretch reads TSEDTKKTEV. T674 carries the post-translational modification Phosphothreonine. Residues S678, S685, S688, S692, S696, S698, S700, S702, and S712 each carry the phosphoserine modification. Low complexity predominate over residues 687–700; it reads TSGPLSPEGSPSKS. Over residues 701-725 the composition is skewed to basic residues; it reads PSKKKKKFRTPSFLKKSKKKEKVES. The interaction with calmodulin stretch occupies residues 703-720; the sequence is KKKKKFRTPSFLKKSKKK.

It belongs to the aldolase class II family. Adducin subfamily. As to quaternary structure, found in a complex with ADD2, DMTN and SLC2A1. Interacts with SLC2A1. Heterodimer of an alpha and a beta subunit.

The protein localises to the cytoplasm. It localises to the cytoskeleton. It is found in the cell membrane. In terms of biological role, membrane-cytoskeleton-associated protein that promotes the assembly of the spectrin-actin network. Binds to the erythrocyte membrane receptor SLC2A1/GLUT1 and may therefore provide a link between the spectrin cytoskeleton to the plasma membrane. Binds to calmodulin. Calmodulin binds preferentially to the beta subunit. The sequence is that of Beta-adducin (Add2) from Mus musculus (Mouse).